We begin with the raw amino-acid sequence, 353 residues long: Rhodopsin (353 aa).

The Extracellular portion of the chain corresponds to 1–36; that stretch reads MNGTEGENFYIPFSNKTGLARSPFEYPQYYLAEPWK. N2 and N15 each carry an N-linked (GlcNAc...) asparagine glycan. A helical membrane pass occupies residues 37–61; the sequence is YSVLAAYMFFLILVGFPVNFLTLFV. Over 62–73 the chain is Cytoplasmic; sequence TVQHKKLRTPLN. The chain crosses the membrane as a helical span at residues 74 to 96; sequence YILLNLAVANLFMVLFGFTLTMY. Topologically, residues 97–110 are extracellular; that stretch reads SSMNGYFVFGPTMC. C110 and C187 are joined by a disulfide. A helical transmembrane segment spans residues 111-133; the sequence is NFEGFFATLGGEMSLWSLVVLAI. The short motif at 134–136 is the 'Ionic lock' involved in activated form stabilization element; the sequence is ERY. Topologically, residues 134-152 are cytoplasmic; the sequence is ERYIVICKPMGNFRFGSTH. The chain crosses the membrane as a helical span at residues 153–173; it reads AYMGVAFTWFMALSCAAPPLV. Residues 174–202 lie on the Extracellular side of the membrane; sequence GWSRYLPEGMQCSCGPDYYTLNPNFNNES. A helical membrane pass occupies residues 203–224; sequence FVIYMFLVHFIIPFIVIFFCYG. Over 225-252 the chain is Cytoplasmic; the sequence is RLLCTVKEAAAAQQESASTQKAEKEVTR. The helical transmembrane segment at 253 to 274 threads the bilayer; that stretch reads MVVLMVIGFLVCWVPYASVAFY. Over 275-286 the chain is Extracellular; it reads IFTHQGSDFGAT. A helical transmembrane segment spans residues 287-308; sequence FMTVPAFFAKTSALYNPIIYIL. K296 carries the N6-(retinylidene)lysine modification. The Cytoplasmic portion of the chain corresponds to 309–353; the sequence is MNKQFRNCMITTLCCGKNPLGDEDSGASTSKTEVSSVSTSQVSPA. Residues 330–353 are disordered; sequence DEDSGASTSKTEVSSVSTSQVSPA. A compositionally biased stretch (low complexity) spans 336–353; that stretch reads STSKTEVSSVSTSQVSPA.

Belongs to the G-protein coupled receptor 1 family. Opsin subfamily. In terms of processing, phosphorylated on some or all of the serine and threonine residues present in the C-terminal region. Post-translationally, contains one covalently linked retinal chromophore.

The protein resides in the membrane. It localises to the cell projection. Its subcellular location is the cilium. It is found in the photoreceptor outer segment. Its function is as follows. Photoreceptor required for image-forming vision at low light intensity. While most salt water fish species use retinal as chromophore, most freshwater fish use 3-dehydroretinal, or a mixture of retinal and 3-dehydroretinal. Light-induced isomerization of 11-cis to all-trans retinal triggers a conformational change that activates signaling via G-proteins. Subsequent receptor phosphorylation mediates displacement of the bound G-protein alpha subunit by arrestin and terminates signaling. This Petromyzon marinus (Sea lamprey) protein is Rhodopsin (RHO).